Consider the following 959-residue polypeptide: Probable transport protein MmpL4 (959 aa).

The next 11 helical transmembrane spans lie at 25 to 45 (FAVP…VFIP), 205 to 225 (VIVI…VILL), 239 to 259 (VVAL…VNLL), 300 to 320 (FHVI…LSFA), 333 to 353 (AVGM…VLTV), 381 to 401 (WPLP…LALP), 766 to 786 (WDLV…MLII), 790 to 810 (FVAA…SFGL), 818 to 838 (ILGI…LLAV), 872 to 892 (VVTN…VSDL), and 902 to 922 (IGLG…PSIA).

The protein belongs to the resistance-nodulation-cell division (RND) (TC 2.A.6) family. MmpL subfamily.

It localises to the cell membrane. This is Probable transport protein MmpL4 (mmpL4) from Mycobacterium leprae (strain TN).